Reading from the N-terminus, the 187-residue chain is Early nodulin-55-2 (187 aa).

Residues 1–26 (MASCLPNASPFLVMLAMCLLISTSEA) form the signal peptide. Residues 27 to 132 (EKYVVGGSEK…GLKLAVLVIS (106 aa)) enclose the Phytocyanin domain. N-linked (GlcNAc...) asparagine glycosylation is found at N78, N116, and N134. The cysteines at positions 85 and 120 are disulfide-linked. Residues 138–167 (KNLLSPSPSPSPPPSSLLSPSPSPLPNNQG) form a disordered region. Pro residues predominate over residues 144–162 (SPSPSPPPSSLLSPSPSPL).

The protein belongs to the early nodulin-like (ENODL) family.

The protein resides in the symbiosome. Its subcellular location is the peribacteroid membrane. May act as a carbohydrate transporter. The protein is Early nodulin-55-2 of Glycine max (Soybean).